The primary structure comprises 337 residues: DNA-directed RNA polymerase subunit alpha (337 aa).

Residues 1-233 (MVREEVVGST…DLFIPFLHAE (233 aa)) form an alpha N-terminal domain (alpha-NTD) region. An alpha C-terminal domain (alpha-CTD) region spans residues 265–337 (KEIALKCIFI…FAIDLPKNKF (73 aa)).

Belongs to the RNA polymerase alpha chain family. In plastids the minimal PEP RNA polymerase catalytic core is composed of four subunits: alpha, beta, beta', and beta''. When a (nuclear-encoded) sigma factor is associated with the core the holoenzyme is formed, which can initiate transcription.

The protein localises to the plastid. The protein resides in the chloroplast. The catalysed reaction is RNA(n) + a ribonucleoside 5'-triphosphate = RNA(n+1) + diphosphate. Its function is as follows. DNA-dependent RNA polymerase catalyzes the transcription of DNA into RNA using the four ribonucleoside triphosphates as substrates. The chain is DNA-directed RNA polymerase subunit alpha from Acorus calamus (Sweet flag).